Reading from the N-terminus, the 249-residue chain is L-fucose operon activator (249 aa).

The 56-residue stretch at 1 to 56 (MNYRDELILQWVNQQGKASVIELAQHCDISVETIRRDLNKLANKGLLHRTHGGAVS) folds into the HTH deoR-type domain. Positions 18 to 37 (ASVIELAQHCDISVETIRRD) form a DNA-binding region, H-T-H motif.

Transcriptional activator of the fuc operon. This is L-fucose operon activator (fucR) from Haemophilus influenzae (strain ATCC 51907 / DSM 11121 / KW20 / Rd).